Reading from the N-terminus, the 555-residue chain is Vacuolar fusion protein MON1 homolog A (555 aa).

Residues 1–12 (MAADMQRKRSSE) show a composition bias toward basic and acidic residues. The disordered stretch occupies residues 1-90 (MAADMQRKRS…PPLATDMRQI (90 aa)). Phosphoserine is present on residues Ser31 and Ser56. Thr61 is modified (phosphothreonine). At Ser91 the chain carries Phosphoserine. A disordered region spans residues 112–149 (MLPGSSEDWPESPGAARRPATEPPRDGAGEGDEEEAAE). Residues 130–139 (PATEPPRDGA) show a composition bias toward basic and acidic residues.

Belongs to the MON1/SAND family. Interacts with CCZ1. Found in a complex with RMC1, CCZ1, MON1A and MON1B. The MON1A-CCZ1B complex interacts with RIMOC1. The MON1A-CCZ1B complex interacts with RAB7A and this interaction is enhanced in the presence of RIMOC1.

Plays an important role in membrane trafficking through the secretory apparatus. Not involved in endocytic trafficking to lysosomes. Acts in concert with CCZ1, as a guanine exchange factor (GEF) for RAB7, promotes the exchange of GDP to GTP, converting it from an inactive GDP-bound form into an active GTP-bound form. The protein is Vacuolar fusion protein MON1 homolog A (MON1A) of Bos taurus (Bovine).